A 556-amino-acid polypeptide reads, in one-letter code: Dihydroxy-acid dehydratase (556 aa).

Cysteine 47 provides a ligand contact to [2Fe-2S] cluster. Aspartate 79 is a Mg(2+) binding site. Cysteine 120 contributes to the [2Fe-2S] cluster binding site. Positions 121 and 122 each coordinate Mg(2+). The residue at position 122 (lysine 122) is an N6-carboxylysine. Cysteine 192 lines the [2Fe-2S] cluster pocket. Glutamate 444 is a Mg(2+) binding site. The active-site Proton acceptor is the serine 470.

It belongs to the IlvD/Edd family. In terms of assembly, homodimer. Requires [2Fe-2S] cluster as cofactor. Mg(2+) serves as cofactor.

It carries out the reaction (2R)-2,3-dihydroxy-3-methylbutanoate = 3-methyl-2-oxobutanoate + H2O. The catalysed reaction is (2R,3R)-2,3-dihydroxy-3-methylpentanoate = (S)-3-methyl-2-oxopentanoate + H2O. Its pathway is amino-acid biosynthesis; L-isoleucine biosynthesis; L-isoleucine from 2-oxobutanoate: step 3/4. The protein operates within amino-acid biosynthesis; L-valine biosynthesis; L-valine from pyruvate: step 3/4. Functions in the biosynthesis of branched-chain amino acids. Catalyzes the dehydration of (2R,3R)-2,3-dihydroxy-3-methylpentanoate (2,3-dihydroxy-3-methylvalerate) into 2-oxo-3-methylpentanoate (2-oxo-3-methylvalerate) and of (2R)-2,3-dihydroxy-3-methylbutanoate (2,3-dihydroxyisovalerate) into 2-oxo-3-methylbutanoate (2-oxoisovalerate), the penultimate precursor to L-isoleucine and L-valine, respectively. This is Dihydroxy-acid dehydratase from Prochlorococcus marinus (strain MIT 9303).